The following is a 336-amino-acid chain: Flap endonuclease 1 (336 aa).

The interval 1–98 (MGVDLGDILS…GTLAARAQMK (98 aa)) is N-domain. 7 residues coordinate Mg(2+): Asp-27, Asp-80, Glu-150, Glu-152, Asp-171, Asp-173, and Asp-234. Positions 114-255 (DSFRYAQATA…RALKLIREHG (142 aa)) are I-domain. Residues 328–336 (GQSTLERWL) are interaction with PCNA.

This sequence belongs to the XPG/RAD2 endonuclease family. FEN1 subfamily. Interacts with PCNA. PCNA stimulates the nuclease activity without altering cleavage specificity. Mg(2+) is required as a cofactor.

Its function is as follows. Structure-specific nuclease with 5'-flap endonuclease and 5'-3' exonuclease activities involved in DNA replication and repair. During DNA replication, cleaves the 5'-overhanging flap structure that is generated by displacement synthesis when DNA polymerase encounters the 5'-end of a downstream Okazaki fragment. Binds the unpaired 3'-DNA end and kinks the DNA to facilitate 5' cleavage specificity. Cleaves one nucleotide into the double-stranded DNA from the junction in flap DNA, leaving a nick for ligation. Also involved in the base excision repair (BER) pathway. Acts as a genome stabilization factor that prevents flaps from equilibrating into structures that lead to duplications and deletions. Also possesses 5'-3' exonuclease activity on nicked or gapped double-stranded DNA. The chain is Flap endonuclease 1 from Methanothrix thermoacetophila (strain DSM 6194 / JCM 14653 / NBRC 101360 / PT) (Methanosaeta thermophila).